A 399-amino-acid polypeptide reads, in one-letter code: Adenylate cyclase (399 aa).

Positions 1–10 (MTVGDTTSGS) are enriched in polar residues. Residues 1–35 (MTVGDTTSGSGEEPAADSSVHATPHHEVDHTVEPT) are disordered. The segment covering 24–33 (PHHEVDHTVE) has biased composition (basic and acidic residues). One can recognise a Guanylate cyclase domain in the interval 198–307 (RVRFADLVGF…TTVNLASRLT (110 aa)). The Mg(2+) site is built by aspartate 203 and aspartate 247.

This sequence belongs to the adenylyl cyclase class-3 family. It depends on Mg(2+) as a cofactor.

It catalyses the reaction ATP = 3',5'-cyclic AMP + diphosphate. The chain is Adenylate cyclase (cya) from Streptomyces griseus.